Consider the following 236-residue polypeptide: 2,3,4,5-tetrahydropyridine-2,6-dicarboxylate N-acetyltransferase (236 aa).

Belongs to the transferase hexapeptide repeat family. DapH subfamily.

It carries out the reaction (S)-2,3,4,5-tetrahydrodipicolinate + acetyl-CoA + H2O = L-2-acetamido-6-oxoheptanedioate + CoA. The protein operates within amino-acid biosynthesis; L-lysine biosynthesis via DAP pathway; LL-2,6-diaminopimelate from (S)-tetrahydrodipicolinate (acetylase route): step 1/3. In terms of biological role, catalyzes the transfer of an acetyl group from acetyl-CoA to tetrahydrodipicolinate. The sequence is that of 2,3,4,5-tetrahydropyridine-2,6-dicarboxylate N-acetyltransferase from Listeria innocua serovar 6a (strain ATCC BAA-680 / CLIP 11262).